We begin with the raw amino-acid sequence, 117 residues long: Ig heavy chain V region UPC10 (117 aa).

Residues Glu1–Ser116 form the Ig-like domain.

The chain is Ig heavy chain V region UPC10 from Mus musculus (Mouse).